The following is a 148-amino-acid chain: Universal stress protein A (148 aa).

This sequence belongs to the universal stress protein A family. Homodimer.

The protein localises to the cytoplasm. In terms of biological role, required for resistance to DNA-damaging agents. This chain is Universal stress protein A (uspA), found in Yersinia pestis.